A 125-amino-acid chain; its full sequence is Basic leucine zipper transcriptional factor ATF-like (125 aa).

Low complexity predominate over residues 1–14 (MPHSSDSSDSSFSR). Residues 1-59 (MPHSSDSSDSSFSRSPPPGKQDSSDDVRKVQRREKNRIAAQKSRQRQTQKADTLHLESE) form a disordered region. A bZIP domain is found at 26 to 89 (DVRKVQRREK…KYFTSVLSSH (64 aa)). The basic motif stretch occupies residues 28–50 (RKVQRREKNRIAAQKSRQRQTQK). Ser43 carries the phosphoserine modification. Position 48 is a phosphothreonine (Thr48). Residues 54-75 (LHLESEDLEKQNAALRKEIKQL) are leucine-zipper.

This sequence belongs to the bZIP family. In terms of assembly, heterodimer; mainly heterodimerizes with JUNB. The BATF-JUNB heterodimer interacts with IRF4 and IRF8. Interacts (via bZIP domain) with IRF4 and IRF8; the interaction is direct. Also forms heterodimers with JUN and JUND. Interacts with IFI35. Post-translationally, phosphorylated on serine and threonine residues and at least one tyrosine residue. Phosphorylation at Ser-43 inhibit DNA binding activity and transforms it as a negative regulator of AP-1 mediated transcription. Detected in postnatal and adult lymphoid tissues such as thymus, spleen and lymph nodes. In thymus most concentrated expression is found in the immediate cortical layer. Differentially expressed during T-cell development in thymus. Highly expressed in Th17, Th1 and Th2 cells and in activated B-cells.

The protein resides in the nucleus. Its subcellular location is the cytoplasm. AP-1 family transcription factor that controls the differentiation of lineage-specific cells in the immune system: specifically mediates the differentiation of T-helper 17 cells (Th17), follicular T-helper cells (TfH), CD8(+) dendritic cells and class-switch recombination (CSR) in B-cells. Acts via the formation of a heterodimer with JUNB that recognizes and binds DNA sequence 5'-TGA[CG]TCA-3'. The BATF-JUNB heterodimer also forms a complex with IRF4 (or IRF8) in immune cells, leading to recognition of AICE sequence (5'-TGAnTCA/GAAA-3'), an immune-specific regulatory element, followed by cooperative binding of BATF and IRF4 (or IRF8) and activation of genes. Controls differentiation of T-helper cells producing interleukin-17 (Th17 cells) by binding to Th17-associated gene promoters: regulates expression of the transcription factor RORC itself and RORC target genes such as IL17 (IL17A or IL17B). Also involved in differentiation of follicular T-helper cells (TfH) by directing expression of BCL6 and MAF. In B-cells, involved in class-switch recombination (CSR) by controlling the expression of both AICDA and of germline transcripts of the intervening heavy-chain region and constant heavy-chain region (I(H)-C(H)). Following infection, can participate in CD8(+) dendritic cell differentiation via interaction with IRF4 and IRF8 to mediate cooperative gene activation. Regulates effector CD8(+) T-cell differentiation by regulating expression of SIRT1. Following DNA damage, part of a differentiation checkpoint that limits self-renewal of hematopoietic stem cells (HSCs): up-regulated by STAT3, leading to differentiation of HSCs, thereby restricting self-renewal of HSCs. The sequence is that of Basic leucine zipper transcriptional factor ATF-like (Batf) from Mus musculus (Mouse).